The following is a 344-amino-acid chain: tRNA N6-adenosine threonylcarbamoyltransferase (344 aa).

Positions 110 and 114 each coordinate Fe cation. Residues 133 to 137 (VVSGA), Asp-166, Gly-179, and Asn-278 each bind substrate. Asp-303 lines the Fe cation pocket.

It belongs to the KAE1 / TsaD family. Fe(2+) serves as cofactor.

It localises to the cytoplasm. It catalyses the reaction L-threonylcarbamoyladenylate + adenosine(37) in tRNA = N(6)-L-threonylcarbamoyladenosine(37) in tRNA + AMP + H(+). Required for the formation of a threonylcarbamoyl group on adenosine at position 37 (t(6)A37) in tRNAs that read codons beginning with adenine. Is involved in the transfer of the threonylcarbamoyl moiety of threonylcarbamoyl-AMP (TC-AMP) to the N6 group of A37, together with TsaE and TsaB. TsaD likely plays a direct catalytic role in this reaction. The polypeptide is tRNA N6-adenosine threonylcarbamoyltransferase (Chlamydia abortus (strain DSM 27085 / S26/3) (Chlamydophila abortus)).